Consider the following 294-residue polypeptide: ATP synthase gamma chain (294 aa).

The protein belongs to the ATPase gamma chain family. F-type ATPases have 2 components, CF(1) - the catalytic core - and CF(0) - the membrane proton channel. CF(1) has five subunits: alpha(3), beta(3), gamma(1), delta(1), epsilon(1). CF(0) has three main subunits: a, b and c.

The protein localises to the cell inner membrane. In terms of biological role, produces ATP from ADP in the presence of a proton gradient across the membrane. The gamma chain is believed to be important in regulating ATPase activity and the flow of protons through the CF(0) complex. The polypeptide is ATP synthase gamma chain (Campylobacter jejuni subsp. jejuni serotype O:23/36 (strain 81-176)).